A 217-amino-acid polypeptide reads, in one-letter code: MQFFIDTANIDEIKQAIDWGILDGVTTNPTLAAKTGRPFMDVVKDILSIVDGPVSLETVSLDTEGMVKEGRFLAELGDNVVVKIPMTKEGMKAVNILEEEGIPTNVTLIFSPMQALIAAKAGASYVSPFIGRLDDISTDGMNLVRDIRTIFDNYGYETEIIAASIRHPIHVLEAAKAGADIATIPFNVLEALFRHPLTDIGIDKFLKDWEKVPNKPF.

Catalysis depends on Lys83, which acts as the Schiff-base intermediate with substrate.

Belongs to the transaldolase family. Type 3B subfamily.

It localises to the cytoplasm. It catalyses the reaction D-sedoheptulose 7-phosphate + D-glyceraldehyde 3-phosphate = D-erythrose 4-phosphate + beta-D-fructose 6-phosphate. It participates in carbohydrate degradation; pentose phosphate pathway; D-glyceraldehyde 3-phosphate and beta-D-fructose 6-phosphate from D-ribose 5-phosphate and D-xylulose 5-phosphate (non-oxidative stage): step 2/3. Its function is as follows. Transaldolase is important for the balance of metabolites in the pentose-phosphate pathway. This is Probable transaldolase from Hydrogenobaculum sp. (strain Y04AAS1).